The following is a 460-amino-acid chain: NADH-ubiquinone oxidoreductase chain 4 (460 aa).

12 helical membrane-spanning segments follow: residues 20 to 42 (PKWL…LTWL), 61 to 81 (PLST…VLAS), 93 to 113 (QRLY…AFGA), 114 to 134 (TEII…LIII), 148 to 168 (TYFL…LLLL), 195 to 215 (IWWA…GVHL), 225 to 245 (PVAG…YGMM), 258 to 278 (LAYP…SICL), 285 to 304 (SLIA…GILI), 309 to 331 (GFTG…FCLA), 351 to 371 (MIFP…LALP), and 394 to 414 (IILT…LFLM).

The protein belongs to the complex I subunit 4 family.

It localises to the mitochondrion membrane. It catalyses the reaction a ubiquinone + NADH + 5 H(+)(in) = a ubiquinol + NAD(+) + 4 H(+)(out). Its function is as follows. Core subunit of the mitochondrial membrane respiratory chain NADH dehydrogenase (Complex I) that is believed to belong to the minimal assembly required for catalysis. Complex I functions in the transfer of electrons from NADH to the respiratory chain. The immediate electron acceptor for the enzyme is believed to be ubiquinone. In Formosania lacustris (Oriental stream loach), this protein is NADH-ubiquinone oxidoreductase chain 4 (MT-ND4).